A 47-amino-acid chain; its full sequence is Small, acid-soluble spore protein N (47 aa).

The tract at residues 1–47 (MSNPKRSPNHFAPNHIGTQPRAAGGNKGKQMQDQSGQHAQVIQTKGE) is disordered. Residues 29–47 (KQMQDQSGQHAQVIQTKGE) are compositionally biased toward polar residues.

The protein belongs to the SspN family.

It localises to the spore core. The polypeptide is Small, acid-soluble spore protein N (Geobacillus thermodenitrificans (strain NG80-2)).